Here is a 1273-residue protein sequence, read N- to C-terminus: Clustered mitochondria protein homolog (1273 aa).

Residues 344–599 (PANNADYSRM…NTYPLDVKFA (256 aa)) enclose the Clu domain. TPR repeat units lie at residues 981–1013 (SDQK…KEEV), 1022–1055 (AEKY…YERV), and 1151–1184 (ATLE…FTRE). 2 disordered regions span residues 1217-1242 (AEQA…KAEL) and 1254-1273 (IEGG…KGKK). Basic residues predominate over residues 1262–1273 (SKKKSSKKKGKK).

It belongs to the CLU family. May associate with the eukaryotic translation initiation factor 3 (eIF-3) complex.

The protein localises to the cytoplasm. In terms of biological role, mRNA-binding protein involved in proper cytoplasmic distribution of mitochondria. This Vanderwaltozyma polyspora (strain ATCC 22028 / DSM 70294 / BCRC 21397 / CBS 2163 / NBRC 10782 / NRRL Y-8283 / UCD 57-17) (Kluyveromyces polysporus) protein is Clustered mitochondria protein homolog.